A 356-amino-acid chain; its full sequence is Tyrosine recombinase XerS (356 aa).

Residues 16 to 121 enclose the Core-binding (CB) domain; it reads LMPWYVLEYY…ALSSLYKYLT (106 aa). Residues 169–354 enclose the Tyr recombinase domain; that stretch reads GFLTYIDQEH…VSDEQKNALD (186 aa). Catalysis depends on residues arginine 210, lysine 234, histidine 306, arginine 309, and histidine 332. Tyrosine 341 serves as the catalytic O-(3'-phospho-DNA)-tyrosine intermediate.

It belongs to the 'phage' integrase family. XerS subfamily.

It is found in the cytoplasm. Its activity is regulated as follows. FtsK is required for recombination. Functionally, site-specific tyrosine recombinase, which acts by catalyzing the cutting and rejoining of the recombining DNA molecules. Essential to convert dimers of the bacterial chromosome into monomers to permit their segregation at cell division. This chain is Tyrosine recombinase XerS, found in Streptococcus pneumoniae serotype 4 (strain ATCC BAA-334 / TIGR4).